A 356-amino-acid polypeptide reads, in one-letter code: Protein MGF 360-3L (356 aa).

One copy of the ANK repeat lies at Lys61–Leu93.

Belongs to the asfivirus MGF 360 family.

Plays a role in virus cell tropism, and may be required for efficient virus replication in macrophages. The sequence is that of Protein MGF 360-3L from African swine fever virus (strain Badajoz 1971 Vero-adapted) (Ba71V).